The sequence spans 184 residues: Putative tetraheme cytochrome-c type (184 aa).

Residues 1–14 lie on the Cytoplasmic side of the membrane; that stretch reads MSKHAASSAKRFSL. A helical membrane pass occupies residues 15 to 35; that stretch reads LALGLMFVGGIVFVWAVDFGI. Over 36 to 184 the chain is Periplasmic; the sequence is KTTNTLEFCT…HEPTEPDDAS (149 aa). Positions 44, 47, 50, 73, 76, and 77 each coordinate heme. Substrate-binding residues include Lys89 and Asp95. Residues Asp95, Cys133, Cys136, His137, Cys165, Cys168, His169, and His174 each coordinate heme.

It belongs to the NapC/NirT/NrfH family. Post-translationally, binds 4 heme groups per subunit.

It localises to the cell inner membrane. In Allochromatium vinosum (strain ATCC 17899 / DSM 180 / NBRC 103801 / NCIMB 10441 / D) (Chromatium vinosum), this protein is Putative tetraheme cytochrome-c type.